A 292-amino-acid chain; its full sequence is MSRIPLGKVLLRNVIRHTDAHNKIQEESDMWKIRELEKQMEDAYRGTKRKMLPSSSSRMRSDGFDEESQRYYWRPKNEISGTLEDDFLKAKSWNKKFYDYEANMPDRWGHSGYKELYPEEFETDSDQQDITNGKKTSPQVKSSTHESRKHKKSKKSHKKKQKKRSHKKQKKSKKEATDITADSSSEFSEETGASGTRKGKQPHKRKKKSRKKSLKKPALFLEAESNTSHSDDSASSSSEESEERDTKKTKRKKREKKAHTSVANNEIQERTNKRTNWKVATDERSAESSEDD.

Lys8 participates in a covalent cross-link: Glycyl lysine isopeptide (Lys-Gly) (interchain with G-Cter in SUMO2). Residues 47-67 are disordered; that stretch reads TKRKMLPSSSSRMRSDGFDEE. Lys76 participates in a covalent cross-link: Glycyl lysine isopeptide (Lys-Gly) (interchain with G-Cter in SUMO2). Phosphothreonine is present on Asn94. 2 positions are modified to phosphoserine: Lys96 and Phe97. The segment at 122–292 is disordered; the sequence is ETDSDQQDIT…ERSAESSEDD (171 aa). Thr123 carries the phosphothreonine modification. 2 positions are modified to phosphoserine: Ser125 and Asp126. A compositionally biased stretch (polar residues) spans 128–140; sequence QDITNGKKTSPQV. The segment covering 147–173 has biased composition (basic residues); it reads SRKHKKSKKSHKKKQKKRSHKKQKKSK. Residues 180–194 show a composition bias toward polar residues; the sequence is TADSSSEFSEETGAS. Basic residues-rich tracts occupy residues 197–215 and 247–259; these read RKGK…KSLK and KKTK…KKAH. Residues 280 to 292 are compositionally biased toward basic and acidic residues; the sequence is ATDERSAESSEDD.

This is an uncharacterized protein from Homo sapiens (Human).